Reading from the N-terminus, the 120-residue chain is Large ribosomal subunit protein uL18 (120 aa).

Residues 1-10 (MKRTRTESVQ) are compositionally biased toward basic and acidic residues. The tract at residues 1–24 (MKRTRTESVQRRHSRIRRKVEGTP) is disordered.

It belongs to the universal ribosomal protein uL18 family. As to quaternary structure, part of the 50S ribosomal subunit; part of the 5S rRNA/L5/L18/L25 subcomplex. Contacts the 5S and 23S rRNAs.

In terms of biological role, this is one of the proteins that bind and probably mediate the attachment of the 5S RNA into the large ribosomal subunit, where it forms part of the central protuberance. The polypeptide is Large ribosomal subunit protein uL18 (Gloeothece citriformis (strain PCC 7424) (Cyanothece sp. (strain PCC 7424))).